We begin with the raw amino-acid sequence, 194 residues long: Ribose 1,5-bisphosphate phosphokinase PhnN (194 aa).

24 to 31 (GPSGAGKD) is an ATP binding site.

The protein belongs to the ribose 1,5-bisphosphokinase family.

The enzyme catalyses alpha-D-ribose 1,5-bisphosphate + ATP = 5-phospho-alpha-D-ribose 1-diphosphate + ADP. It functions in the pathway metabolic intermediate biosynthesis; 5-phospho-alpha-D-ribose 1-diphosphate biosynthesis; 5-phospho-alpha-D-ribose 1-diphosphate from D-ribose 5-phosphate (route II): step 3/3. In terms of biological role, catalyzes the phosphorylation of ribose 1,5-bisphosphate to 5-phospho-D-ribosyl alpha-1-diphosphate (PRPP). In Rhodopseudomonas palustris (strain ATCC BAA-98 / CGA009), this protein is Ribose 1,5-bisphosphate phosphokinase PhnN.